We begin with the raw amino-acid sequence, 422 residues long: Serine--tRNA ligase (422 aa).

229–231 is a binding site for L-serine; it reads TAE. Residue 260–262 participates in ATP binding; sequence RRE. Glu-283 lines the L-serine pocket. 347–350 contributes to the ATP binding site; that stretch reads EISS. Ser-383 is a binding site for L-serine.

This sequence belongs to the class-II aminoacyl-tRNA synthetase family. Type-1 seryl-tRNA synthetase subfamily. As to quaternary structure, homodimer. The tRNA molecule binds across the dimer.

It localises to the cytoplasm. It carries out the reaction tRNA(Ser) + L-serine + ATP = L-seryl-tRNA(Ser) + AMP + diphosphate + H(+). The enzyme catalyses tRNA(Sec) + L-serine + ATP = L-seryl-tRNA(Sec) + AMP + diphosphate + H(+). The protein operates within aminoacyl-tRNA biosynthesis; selenocysteinyl-tRNA(Sec) biosynthesis; L-seryl-tRNA(Sec) from L-serine and tRNA(Sec): step 1/1. Functionally, catalyzes the attachment of serine to tRNA(Ser). Is also able to aminoacylate tRNA(Sec) with serine, to form the misacylated tRNA L-seryl-tRNA(Sec), which will be further converted into selenocysteinyl-tRNA(Sec). The chain is Serine--tRNA ligase from Pelobacter propionicus (strain DSM 2379 / NBRC 103807 / OttBd1).